Reading from the N-terminus, the 276-residue chain is MNQVWNIARKELSDGLRNRWLLAISLLFAVLAVGIAWLGAAASGQLGFTSIPATIASLASLATFLMPLIALLLAYDAIVGEDEGGTLMLLLTYPLGRGQILLGKFVGHGLILALAVLIGFGCAALAIALLVEGVELGMLFWAFGRFMISSTLLGWVFLAFAYVLSGKVNEKSSAAGLALGVWFLFVLVFDLVLLALLVLSEGKFNPELLPWLLLLNPTDIYRLINLSGFEGSGSAMGVLSLGADLPVPAAVLWLCLLAWIGVSLLLAYAIFRRRLT.

The next 6 helical transmembrane spans lie at 20 to 40 (WLLA…WLGA), 55 to 75 (IASL…LLAY), 111 to 131 (ILAL…ALLV), 146 to 166 (FMIS…VLSG), 179 to 199 (LGVW…LLVL), and 251 to 271 (VLWL…YAIF).

As to quaternary structure, the complex may be composed of an ATP-binding protein (NosF), a transmembrane protein (NosY) and a solute-binding protein (NosD).

It localises to the cell inner membrane. Functionally, required for the assembly of the copper chromophores of nitrous oxide reductase. Could be part of the ABC transporter complex NosDFY. This chain is Probable ABC transporter permease protein NosY, found in Stutzerimonas stutzeri (Pseudomonas stutzeri).